The following is a 526-amino-acid chain: MSGFNFGGTGAPAGGFTFGTAKTATTTPATGFSFSASGTGTGGFNFGTPSQPAATTPSTSLFSLTTQTPTTQTPGFNFGTTPASGGTGFSLGISTPKLSLSNAAATPATANTGSFGLGSSTLTNAISSGSTSNQGTAPTGFVFGSSTTSAPSTGSTGFSFTSGSASQPGASGFSLGSVGSSAQPTALSGSPFTPATLVTTTAGATQPAAAAPTAATTSAGSTLFASIAAAPASSSATGLSLPAPVTTAATPSAGTLGFSLKAPGAAPGASTTSTTTTTTTTTTTAAAAAASTTTTGFALSLKPLVSAGPSSVAATALPASSTAAGTATGPAMTYAQLESLINKWSLELEDQERHFLQQATQVNAWDRTLIENGEKITSLHREVEKVKLDQKRLDQELDFILSQQKELEDLLSPLEESVKEQSGTIYLQHADEEREKTYKLAENIDAQLKRMAQDLKDIIEHLNMAGGPADTSDPLQQICKILNAHMDSLQWVDQSSALLQRRVEEASRVCEGRRKEQERSLRIAFD.

Ser-2 bears the N-acetylserine mark. 4 repeat units span residues 6 to 7, 46 to 47, 78 to 79, and 115 to 116. The segment at 6-144 is 5 X 2 AA repeats of F-G; the sequence is FGGTGAPAGG…GTAPTGFVFG (139 aa). A disordered region spans residues 43–82; it reads GFNFGTPSQPAATTPSTSLFSLTTQTPTTQTPGFNFGTTP. Residues 46 to 81 are compositionally biased toward low complexity; sequence FGTPSQPAATTPSTSLFSLTTQTPTTQTPGFNFGTT. Over residues 128–137 the composition is skewed to polar residues; that stretch reads SGSTSNQGTA. The segment at 128-148 is disordered; the sequence is SGSTSNQGTAPTGFVFGSSTT. Repeat 5 spans residues 143–144; the sequence is FG. A required for centrosome localization region spans residues 332–462; sequence MTYAQLESLI…QDLKDIIEHL (131 aa). The stretch at 332 to 462 forms a coiled coil; it reads MTYAQLESLI…QDLKDIIEHL (131 aa). Thr-377 is a glycosylation site (O-linked (GlcNAc) threonine). 2 positions are modified to phosphoserine: Ser-412 and Ser-422. Ser-472 carries O-linked (GlcNAc) serine glycosylation.

The protein belongs to the nucleoporin NSP1/NUP62 family. Component of the p62 complex, a complex at least composed of NUP62, NUP54, and NUP58. Interacts with NUP88. Interacts with NUTF2. Interacts with HIKESHI. Interacts with OSBPL8. Interacts with CAPG. Interacts with SAS6 and TUBG1 at the centrosome. Interacts with MCM3AP. In terms of processing, O-glycosylated. Post-translationally, the inner channel of the NPC has a different redox environment from the cytoplasm and allows the formation of interchain disulfide bonds between some nucleoporins, the significant increase of these linkages upon oxidative stress reduces the permeability of the NPC.

It localises to the nucleus. The protein resides in the nuclear pore complex. Its subcellular location is the cytoplasm. It is found in the cytoskeleton. The protein localises to the spindle pole. It localises to the nucleus envelope. The protein resides in the microtubule organizing center. Its subcellular location is the centrosome. Its function is as follows. Essential component of the nuclear pore complex. The N-terminal is probably involved in nucleocytoplasmic transport. The C-terminal is involved in protein-protein interaction probably via coiled-coil formation, promotes its association with centrosomes and may function in anchorage of p62 to the pore complex. Plays a role in mitotic cell cycle progression by regulating centrosome segregation, centriole maturation and spindle orientation. It might be involved in protein recruitment to the centrosome after nuclear breakdown. The protein is Nuclear pore glycoprotein p62 (Nup62) of Mus musculus (Mouse).